Reading from the N-terminus, the 373-residue chain is NAD(P)H-quinone oxidoreductase subunit 1 (373 aa).

8 helical membrane passes run 28–48, 98–118, 129–149, 177–197, 205–225, 267–287, 309–329, and 348–368; these read LLWLPLPMLLVLVAAVVGVLV, LLFTLGPVLVVVPVIISWLII, VGVGIFLWISFSSIQPIGLLM, LALAVLAIVMMTNSLSTVDIV, ILSWNIWRQPVGFLIFWICAL, VLSAVLVSVLYLGGWGFPIPV, TVGIVMTVLKAYLLVFVAILL, and FLLPLSLVNLLVTAALKLAFP.

It belongs to the complex I subunit 1 family. In terms of assembly, NDH-1 is composed of at least 11 different subunits.

Its subcellular location is the cellular thylakoid membrane. The catalysed reaction is a plastoquinone + NADH + (n+1) H(+)(in) = a plastoquinol + NAD(+) + n H(+)(out). It carries out the reaction a plastoquinone + NADPH + (n+1) H(+)(in) = a plastoquinol + NADP(+) + n H(+)(out). Functionally, NDH-1 shuttles electrons from an unknown electron donor, via FMN and iron-sulfur (Fe-S) centers, to quinones in the respiratory and/or the photosynthetic chain. The immediate electron acceptor for the enzyme in this species is believed to be plastoquinone. Couples the redox reaction to proton translocation, and thus conserves the redox energy in a proton gradient. The polypeptide is NAD(P)H-quinone oxidoreductase subunit 1 (Synechococcus sp. (strain CC9605)).